Here is a 121-residue protein sequence, read N- to C-terminus: Large ribosomal subunit protein bL12 (121 aa).

It belongs to the bacterial ribosomal protein bL12 family. Homodimer. Part of the ribosomal stalk of the 50S ribosomal subunit. Forms a multimeric L10(L12)X complex, where L10 forms an elongated spine to which 2 to 4 L12 dimers bind in a sequential fashion. Binds GTP-bound translation factors.

Functionally, forms part of the ribosomal stalk which helps the ribosome interact with GTP-bound translation factors. Is thus essential for accurate translation. The protein is Large ribosomal subunit protein bL12 of Erwinia tasmaniensis (strain DSM 17950 / CFBP 7177 / CIP 109463 / NCPPB 4357 / Et1/99).